We begin with the raw amino-acid sequence, 163 residues long: Phosphopantetheine adenylyltransferase (163 aa).

Thr11 serves as a coordination point for substrate. Residues 11–12 (TF) and His19 each bind ATP. Substrate-binding residues include Lys43, Leu75, and Arg89. ATP is bound by residues 90–92 (GLR), Glu100, and 125–131 (YSFISST).

It belongs to the bacterial CoaD family. As to quaternary structure, homohexamer. The cofactor is Mg(2+).

It localises to the cytoplasm. The catalysed reaction is (R)-4'-phosphopantetheine + ATP + H(+) = 3'-dephospho-CoA + diphosphate. It functions in the pathway cofactor biosynthesis; coenzyme A biosynthesis; CoA from (R)-pantothenate: step 4/5. Its function is as follows. Reversibly transfers an adenylyl group from ATP to 4'-phosphopantetheine, yielding dephospho-CoA (dPCoA) and pyrophosphate. In Acinetobacter baylyi (strain ATCC 33305 / BD413 / ADP1), this protein is Phosphopantetheine adenylyltransferase.